We begin with the raw amino-acid sequence, 115 residues long: Divalent-cation tolerance protein CutA (115 aa).

Cu cation contacts are provided by Cys19, His86, and His87.

Belongs to the CutA family. In terms of assembly, homotrimer. It depends on Cu cation as a cofactor.

The protein resides in the cytoplasm. Its function is as follows. Involved in resistance toward heavy metals. The polypeptide is Divalent-cation tolerance protein CutA (Citrobacter koseri (strain ATCC BAA-895 / CDC 4225-83 / SGSC4696)).